Here is a 492-residue protein sequence, read N- to C-terminus: Myocyte-specific enhancer factor 2A (492 aa).

In terms of domain architecture, MADS-box spans 3–57 (RKKIQITRIMDERNRQVTFTKRKFGLMKKAYELSVLCDCEIALIIFNSSNKLFQY). Residues 58-86 (ASTDMDKVLLKYTEYNEPHESRTNSDIVE) constitute a DNA-binding region (mef2-type). Ser-59 is subject to Phosphoserine; by CK2. Phosphoserine is present on Ser-98. Residues 183–227 (PQATLHRNVSPGAPQRPPSTGSAGGMLSTSDLTVPNGAGSSPVGN) form a disordered region. Polar residues predominate over residues 209 to 227 (LSTSDLTVPNGAGSSPVGN). A Phosphoserine modification is found at Ser-235. The disordered stretch occupies residues 242 to 270 (TGANSLGKVMPTKSPPPPGGGSLGMNSRK). Lys-249 carries the post-translational modification N6-acetyllysine. Ser-255 is modified (phosphoserine). Positions 266–283 (MNSRKPDLRVVIPPSSKG) are required for interaction with MAPKs. Phosphothreonine; by MAPK7 and MAPK14 is present on residues Thr-304 and Thr-311. A Phosphoserine; by MAPK7 modification is found at Ser-347. Residues 382–394 (SNLSINTNQNINI) show a composition bias toward polar residues. Residues 382-492 (SNLSINTNQN…KRMRMDAWVT (111 aa)) are disordered. Lys-395 carries the N6-acetyllysine; alternate modification. Residue Lys-395 forms a Glycyl lysine isopeptide (Lys-Gly) (interchain with G-Cter in SUMO); alternate linkage. At Ser-400 the chain carries Phosphoserine; by CDK5. A Phosphothreonine modification is found at Thr-407. A compositionally biased stretch (pro residues) spans 417–430 (PQPPPPPPQAPQPQ). Ser-438 is modified (phosphoserine; by MAPK). Residues 438–451 (SPVDSLSSSSSSYD) are compositionally biased toward low complexity. 2 stretches are compositionally biased toward basic and acidic residues: residues 452-462 (GSDREDPRGDF) and 473-492 (NSEDRESPSVKRMRMDAWVT).

Binds DNA as a homo- or heterodimer. Dimerizes with MEF2D. Interacts with HDAC7. Interacts with PIAS1; the interaction enhances sumoylation. Interacts with HDAC4, HDAC9 and SLC2A4RG. Interacts (via the N-terminal) with MAPK7; the interaction results in the phosphorylation and transcriptional activity of MEF2A. In terms of processing, constitutive phosphorylation on Ser-400 promotes Lys-395 sumoylation thus preventing acetylation at this site. Dephosphorylation on Ser-400 by PPP3CA upon neuron depolarization promotes a switch from sumoylation to acetylation on residue Lys-395 leading to inhibition of dendrite claw differentiation. Phosphorylation on Thr-304 and Thr-311 are the main sites involved in p38 MAPK signaling and activate transcription. Phosphorylated on these sites by MAPK14/p38alpha and MAPK11/p38beta, but not by MAPK13/p38delta nor by MAPK12/p38gamma. Phosphorylation on Ser-400 by CDK5 induced by neurotoxicity inhibits MEF2A transcriptional activation leading to apoptosis of cortical neurons. Phosphorylation on Thr-304, Thr-311 and Ser-347 can be induced by EGF. Sumoylation on Lys-395 is enhanced by PIAS1 and represses transcriptional activity. Phosphorylation on Ser-400 is required for sumoylation. Has no effect on nuclear location nor on DNA binding. Sumoylated with SUMO1 and, to a lesser extent with SUMO2 and SUMO3. PIASx facilitates sumoylation in postsynaptic dendrites in the cerebellar cortex and promotes their morphogenesis. Post-translationally, acetylation on Lys-395 activates transcriptional activity. Acetylated by p300 on several sites in diffentiating myocytes. Acetylation on Lys-4 increases DNA binding and transactivation. Hyperacetylation by p300 leads to enhanced cardiac myocyte growth and heart failure. In terms of processing, proteolytically cleaved in cerebellar granule neurons on several sites by caspase 3 and caspase 7 following neurotoxicity. Preferentially cleaves the CDK5-mediated hyperphosphorylated form which leads to neuron apoptosis and transcriptional inactivation.

The protein resides in the nucleus. Transcriptional activator which binds specifically to the MEF2 element, 5'-YTA[AT](4)TAR-3', found in numerous muscle-specific genes. Also involved in the activation of numerous growth factor- and stress-induced genes. Mediates cellular functions not only in skeletal and cardiac muscle development, but also in neuronal differentiation and survival. Plays diverse roles in the control of cell growth, survival and apoptosis via p38 MAPK signaling in muscle-specific and/or growth factor-related transcription. In cerebellar granule neurons, phosphorylated and sumoylated MEF2A represses transcription of NUR77 promoting synaptic differentiation. Associates with chromatin to the ZNF16 promoter. The protein is Myocyte-specific enhancer factor 2A (MEF2A) of Bos taurus (Bovine).